A 93-amino-acid polypeptide reads, in one-letter code: MARLVNCIKLGREAEGLDFPPYPGALGKRIWEEVSKQAWADWMKQQTMLVNENRLNLADARARQYLARQMEKHFFGDGADAVQGYVPPTPPGA.

It belongs to the Fe(2+)-trafficking protein family.

In terms of biological role, could be a mediator in iron transactions between iron acquisition and iron-requiring processes, such as synthesis and/or repair of Fe-S clusters in biosynthetic enzymes. The sequence is that of Probable Fe(2+)-trafficking protein from Polaromonas naphthalenivorans (strain CJ2).